Consider the following 175-residue polypeptide: Translation initiation factor IF-3 (175 aa).

It belongs to the IF-3 family. As to quaternary structure, monomer.

It localises to the cytoplasm. IF-3 binds to the 30S ribosomal subunit and shifts the equilibrium between 70S ribosomes and their 50S and 30S subunits in favor of the free subunits, thus enhancing the availability of 30S subunits on which protein synthesis initiation begins. This chain is Translation initiation factor IF-3, found in Staphylococcus aureus (strain NCTC 8325 / PS 47).